The primary structure comprises 220 residues: Deoxyribose-phosphate aldolase (220 aa).

Asp-89 functions as the Proton donor/acceptor in the catalytic mechanism. Lys-151 serves as the catalytic Schiff-base intermediate with acetaldehyde. Lys-180 acts as the Proton donor/acceptor in catalysis.

The protein belongs to the DeoC/FbaB aldolase family. DeoC type 1 subfamily.

Its subcellular location is the cytoplasm. The catalysed reaction is 2-deoxy-D-ribose 5-phosphate = D-glyceraldehyde 3-phosphate + acetaldehyde. It participates in carbohydrate degradation; 2-deoxy-D-ribose 1-phosphate degradation; D-glyceraldehyde 3-phosphate and acetaldehyde from 2-deoxy-alpha-D-ribose 1-phosphate: step 2/2. Its function is as follows. Catalyzes a reversible aldol reaction between acetaldehyde and D-glyceraldehyde 3-phosphate to generate 2-deoxy-D-ribose 5-phosphate. In Streptococcus pneumoniae (strain 70585), this protein is Deoxyribose-phosphate aldolase.